The sequence spans 210 residues: Glycerol-3-phosphate acyltransferase (210 aa).

6 helical membrane passes run 8 to 28 (LILL…LLLT), 56 to 76 (GLAA…VLIA), 87 to 107 (TMAV…WLGF), 119 to 139 (TIWV…LLVA), 144 to 164 (ISSA…VLLS), and 165 to 185 (GRPL…LIWA).

The protein belongs to the PlsY family. As to quaternary structure, probably interacts with PlsX.

Its subcellular location is the cell inner membrane. The enzyme catalyses an acyl phosphate + sn-glycerol 3-phosphate = a 1-acyl-sn-glycero-3-phosphate + phosphate. Its pathway is lipid metabolism; phospholipid metabolism. Catalyzes the transfer of an acyl group from acyl-phosphate (acyl-PO(4)) to glycerol-3-phosphate (G3P) to form lysophosphatidic acid (LPA). This enzyme utilizes acyl-phosphate as fatty acyl donor, but not acyl-CoA or acyl-ACP. The protein is Glycerol-3-phosphate acyltransferase of Gluconobacter oxydans (strain 621H) (Gluconobacter suboxydans).